Consider the following 358-residue polypeptide: scyllo-inositol 2-dehydrogenase (NADP(+)) IolW (358 aa).

This sequence belongs to the Gfo/Idh/MocA family.

The catalysed reaction is scyllo-inositol + NADP(+) = scyllo-inosose + NADPH + H(+). In terms of biological role, catalyzes the reversible NADPH-dependent reduction of scyllo-inosose (SIS) to scyllo-inositol (SI). Cannot use NADH instead of NADPH. May be involved in reduction of not only SIS but also various oxidized compounds manifested upon stressful conditions. The polypeptide is scyllo-inositol 2-dehydrogenase (NADP(+)) IolW (Bacillus subtilis (strain 168)).